A 63-amino-acid polypeptide reads, in one-letter code: DNA-directed RNA polymerase 7 kDa subunit (63 aa).

This sequence belongs to the poxviridae DNA-directed RNA polymerase 7 kDa subunit family. In terms of assembly, the DNA-dependent RNA polymerase (vRNAP) consists of eight subunits encoded by early viral genes and termed according to their apparent molecular masses Rpo147, Rpo132, Rpo35, Rpo30, Rpo22, Rpo19, Rpo18, and Rpo7. The same holoenzyme, with the addition of the transcription-specificity factor RAP94, is used for early gene expression.

The protein localises to the virion. The enzyme catalyses RNA(n) + a ribonucleoside 5'-triphosphate = RNA(n+1) + diphosphate. Functionally, part of the DNA-dependent RNA polymerase which catalyzes the transcription of viral DNA into RNA using the four ribonucleoside triphosphates as substrates. Responsible for the transcription of early, intermediate and late genes. DNA-dependent RNA polymerase associates with the early transcription factor (ETF), itself composed of OPG118 and OPG134, thereby allowing the early genes transcription. Late transcription, and probably also intermediate transcription, require newly synthesized RNA polymerase. This chain is DNA-directed RNA polymerase 7 kDa subunit (OPG090), found in Homo sapiens (Human).